We begin with the raw amino-acid sequence, 184 residues long: Ribosome-recycling factor (184 aa).

This sequence belongs to the RRF family.

It localises to the cytoplasm. In terms of biological role, responsible for the release of ribosomes from messenger RNA at the termination of protein biosynthesis. May increase the efficiency of translation by recycling ribosomes from one round of translation to another. The protein is Ribosome-recycling factor of Borrelia garinii subsp. bavariensis (strain ATCC BAA-2496 / DSM 23469 / PBi) (Borreliella bavariensis).